A 213-amino-acid polypeptide reads, in one-letter code: Protein PAE0745 (213 aa).

The AMMECR1 domain maps to 8-201 (EEGTFLVRLA…EKSPGGEVYE (194 aa)).

The protein is Protein PAE0745 of Pyrobaculum aerophilum (strain ATCC 51768 / DSM 7523 / JCM 9630 / CIP 104966 / NBRC 100827 / IM2).